A 180-amino-acid polypeptide reads, in one-letter code: Ribulose bisphosphate carboxylase small subunit, chloroplastic 3 (180 aa).

Residues 1-56 (MASMISSSAVTTVSRASTVQSAAVAPFGGLKSMTGFPVKKVNTDITSITSNGGRVK) constitute a chloroplast transit peptide.

This sequence belongs to the RuBisCO small chain family. Heterohexadecamer of 8 large and 8 small subunits.

The protein resides in the plastid. Its subcellular location is the chloroplast. RuBisCO catalyzes two reactions: the carboxylation of D-ribulose 1,5-bisphosphate, the primary event in carbon dioxide fixation, as well as the oxidative fragmentation of the pentose substrate. Both reactions occur simultaneously and in competition at the same active site. Although the small subunit is not catalytic it is essential for maximal activity. Binds to abscisic acid (ABA); only half of the possible binding sites are occupied in the crystal; and there are indications this is a low affinity site. This Pisum sativum (Garden pea) protein is Ribulose bisphosphate carboxylase small subunit, chloroplastic 3 (RBCS.3A).